The primary structure comprises 2073 residues: Putative mediator of RNA polymerase II transcription subunit 26 (2073 aa).

4 disordered regions span residues 22–94, 115–146, 241–260, and 287–334; these read IERM…QSFQ, PQLQQQQQQQQQQQPSFNSNNNNNNNTNTYNF, QMQQQQIPHHQQNQQLQQQQ, and QQHQ…QNQQ. Polar residues predominate over residues 31 to 41; it reads NQSVEMDSHTF. The segment covering 42-78 has biased composition (low complexity); that stretch reads NNNNNNNNNNNINNNNNINNNNNNNNNNNNNNNSINN. Coiled coils occupy residues 166–453 and 674–710; these read IQQQ…QQQQ and LRQQQQQQQQQQQQQQQQQQQQQQQQQQQIQIQNQTI. Composition is skewed to low complexity over residues 287–314 and 322–334; these read QQHQQHQQHQQHQQQHQQHQQQHQQHQQ and QQHQQQQQPQNQQ. Disordered stretches follow at residues 796-879, 908-1175, 1215-1260, 1403-1475, 1489-1539, 1551-1571, 1587-1645, 1804-1836, 1868-1935, and 2019-2073; these read KGNN…NNDI, INNN…NNNI, NTTS…TVIN, NTSS…LPPK, KLST…SLSP, AAAAKKQQTQELSDSTAKSLS, KSQT…SKGK, INNNNNTHSNSPDENNTKMINDENNDPNNTGSS, NNNN…GYNN, and FNNN…QSYS. 2 stretches are compositionally biased toward low complexity: residues 798–870 and 923–937; these read NNNN…NTNN and SSSSNSNSSSPNIPN. The segment covering 938 to 947 has biased composition (basic residues); it reads KPKKPVKSNS. The segment covering 953–963 has biased composition (acidic residues); sequence LLEDNDSDSSD. Composition is skewed to low complexity over residues 964 to 977, 1027 to 1038, 1047 to 1065, 1073 to 1115, and 1127 to 1156; these read SSDSSDSSDSSDSS, ASTATSTTTTTT, PTSKIKPSSTIPSQPTSIT, STTS…SSSS, and KKPISTINNNTLNNNTNSSINKIASNSTST. Residues 1157–1166 show a composition bias toward polar residues; the sequence is LGNKNLGTPS. 2 stretches are compositionally biased toward low complexity: residues 1215 to 1258 and 1403 to 1424; these read NTTS…TTTV and NTSSTTSSASSSSSSSISNGNN. The segment covering 1425 to 1440 has biased composition (basic and acidic residues); sequence SDKKRNRDQPITDTSK. 4 stretches are compositionally biased toward low complexity: residues 1444-1465, 1490-1520, 1527-1539, and 1551-1560; these read SSSSSSSSSSSSSSSTNARSSS, LSTPSSSSSSSSSSSSSSTTTTTTSTGSTIP, SSSSSNNNNSLSP, and AAAAKKQQTQ. A compositionally biased stretch (polar residues) spans 1561–1571; sequence ELSDSTAKSLS. Low complexity-rich tracts occupy residues 1599–1609 and 1804–1817; these read SSNVSGKSDSS and INNNNNTHSNSPDE. A coiled-coil region spans residues 1884–1930; the sequence is NNMGNMNNQFNNMNNNNNNNQFNNGYNNNNNNNNNNNNNNNNNNNNM.

It belongs to the Mediator complex subunit 26 family. As to quaternary structure, component of the Mediator complex.

It is found in the nucleus. In terms of biological role, component of the Mediator complex, a coactivator involved in the regulated transcription of nearly all RNA polymerase II-dependent genes. Mediator functions as a bridge to convey information from gene-specific regulatory proteins to the basal RNA polymerase II transcription machinery. Mediator is recruited to promoters by direct interactions with regulatory proteins and serves as a scaffold for the assembly of a functional preinitiation complex with RNA polymerase II and the general transcription factors. This Dictyostelium discoideum (Social amoeba) protein is Putative mediator of RNA polymerase II transcription subunit 26 (med26).